The following is a 783-amino-acid chain: Aconitate hydratase, mitochondrial (783 aa).

The N-terminal 25 residues, 1–25 (MITTRLARMGALAPKSRLLFGTRGM), are a transit peptide targeting the mitochondrion. Residues Q102 and 195 to 197 (DSH) contribute to the substrate site. 3 residues coordinate [4Fe-4S] cluster: C388, C451, and C454. Residues R477 and R482 each contribute to the substrate site. Positions 524 to 555 (EFKLKAPTGDGLPSRGYDPGRDTYQAPPTDRS) are disordered. Substrate contacts are provided by residues R610 and 673–674 (SR).

This sequence belongs to the aconitase/IPM isomerase family. [4Fe-4S] cluster serves as cofactor.

It localises to the mitochondrion. It carries out the reaction citrate = D-threo-isocitrate. The enzyme catalyses (2R)-homocitrate = cis-homoaconitate + H2O. The protein operates within carbohydrate metabolism; tricarboxylic acid cycle; isocitrate from oxaloacetate: step 2/2. Its pathway is amino-acid biosynthesis; L-lysine biosynthesis via AAA pathway; L-alpha-aminoadipate from 2-oxoglutarate: step 2/5. Functionally, catalyzes the isomerization of citrate to isocitrate via cis-aconitate, a step in the citric acid cycle. Also catalyzes the reversible dehydration of (R)-homocitrate to cis-homoaconitate, a step in the alpha-aminoadipate pathway for lysine biosynthesis. This chain is Aconitate hydratase, mitochondrial (acoA), found in Emericella nidulans (strain FGSC A4 / ATCC 38163 / CBS 112.46 / NRRL 194 / M139) (Aspergillus nidulans).